Consider the following 719-residue polypeptide: DNA replication licensing factor MCM7 (719 aa).

A2 carries the post-translational modification N-acetylalanine. Glycyl lysine isopeptide (Lys-Gly) (interchain with G-Cter in SUMO2) cross-links involve residues K15 and K28. A phosphoserine mark is found at S121 and S314. The region spanning F332–T538 is the MCM domain. Y345 is an ATP binding site. At S365 the chain carries Phosphoserine. 5 residues coordinate ATP: G384, A386, K387, S388, and N489. Phosphoserine is present on S500. An Arginine finger motif is present at residues S513–D516. Position 514 (R514) interacts with ATP. Positions I521–A564 are interaction with RAD17. The interval L577–V719 is interaction with ATRIP. Position 604 (R604) interacts with ATP. S678 bears the Phosphoserine mark.

This sequence belongs to the MCM family. As to quaternary structure, component of the MCM2-7 complex. The complex forms a toroidal hexameric ring with the proposed subunit order MCM2-MCM6-MCM4-MCM7-MCM3-MCM5. Component of the CMG helicase complex, a hexameric ring of related MCM2-7 subunits stabilized by CDC45 and the tetrameric GINS complex. Interacts with the ATR-ATRIP complex and with RAD17. Interacts with TIPIN. Interacts with MCMBP. Interacts with ANKRD17. Component of the replisome complex composed of at least DONSON, MCM2, MCM7, PCNA and TICRR. Post-translationally, O-glycosylated (O-GlcNAcylated), in a cell cycle-dependent manner. In terms of processing, ubiquitinated by ECS(LRR1) E3 ubiquitin-protein ligase complex when forks converge following formation of DNA interstrand cross-links. During mitosis, ubiquitinated by TRAIP when forks converge following formation of DNA interstrand cross-links. Short ubiquitin chains on MCM7 promote recruitment of DNA glycosylase NEIL3. If the interstrand cross-link cannot be cleaved by NEIL3, the ubiquitin chains continue to grow on MCM7, promoting the unloading of the CMG helicase complex by the VCP/p97 ATPase.

Its subcellular location is the nucleus. It localises to the chromosome. It carries out the reaction ATP + H2O = ADP + phosphate + H(+). Its function is as follows. Acts as a component of the MCM2-7 complex (MCM complex) which is the replicative helicase essential for 'once per cell cycle' DNA replication initiation and elongation in eukaryotic cells. Core component of CDC45-MCM-GINS (CMG) helicase, the molecular machine that unwinds template DNA during replication, and around which the replisome is built. The active ATPase sites in the MCM2-7 ring are formed through the interaction surfaces of two neighboring subunits such that a critical structure of a conserved arginine finger motif is provided in trans relative to the ATP-binding site of the Walker A box of the adjacent subunit. The six ATPase active sites, however, are likely to contribute differentially to the complex helicase activity. Required for S-phase checkpoint activation upon UV-induced damage. In Bos taurus (Bovine), this protein is DNA replication licensing factor MCM7 (MCM7).